The primary structure comprises 196 residues: MTWQSDYSRDYEVKNHMECQNRSDKYIWSPHDAYFYKGLSELIVDIDRLIYLSLEKIRKDFVFINLSTDSLSEFINRDNEWLSAVKGKQVVLIAARKSEALANYWYYNSNIRGVVYAGLSRDIRKELVYVINGRFLRKDIKKDKITDREMEIIRMTAQGMQPKSIARIENCSVKTVYTHRRNAEAKLYSKIYKLVQ.

The HTH luxR-type domain occupies 138–196; sequence KDIKKDKITDREMEIIRMTAQGMQPKSIARIENCSVKTVYTHRRNAEAKLYSKIYKLVQ. Positions 162–181 form a DNA-binding region, H-T-H motif; it reads PKSIARIENCSVKTVYTHRR.

Belongs to the EcpR/MatA family.

The protein resides in the cytoplasm. Functionally, part of the ecpRABCDE operon, which encodes the E.coli common pilus (ECP). ECP is found in both commensal and pathogenic strains and plays a dual role in early-stage biofilm development and host cell recognition. Positively regulates the expression of the ecp operon. This Escherichia coli (strain K12 / DH10B) protein is HTH-type transcriptional regulator EcpR (ecpR).